Here is a 306-residue protein sequence, read N- to C-terminus: Plant-type L-asparaginase (306 aa).

Thr-176 acts as the Nucleophile in catalysis. Substrate is bound by residues 203–206 (RVGD) and 225–228 (TGLG).

The protein belongs to the Ntn-hydrolase family. In terms of assembly, heterotetramer of two alpha and two beta chains arranged as a dimer of alpha/beta heterodimers. Autocleaved. Generates the alpha and beta subunits. The N-terminal residue of the beta subunit is thought to be responsible for the nucleophile hydrolase activity.

The catalysed reaction is L-asparagine + H2O = L-aspartate + NH4(+). In terms of biological role, catalyzes the hydrolysis of L-asparagine into L-aspartate and ammonia. The protein is Plant-type L-asparaginase of Pyrococcus furiosus (strain ATCC 43587 / DSM 3638 / JCM 8422 / Vc1).